A 357-amino-acid chain; its full sequence is S-adenosylmethionine:tRNA ribosyltransferase-isomerase (357 aa).

This sequence belongs to the QueA family. Monomer.

Its subcellular location is the cytoplasm. The enzyme catalyses 7-aminomethyl-7-carbaguanosine(34) in tRNA + S-adenosyl-L-methionine = epoxyqueuosine(34) in tRNA + adenine + L-methionine + 2 H(+). It functions in the pathway tRNA modification; tRNA-queuosine biosynthesis. Its function is as follows. Transfers and isomerizes the ribose moiety from AdoMet to the 7-aminomethyl group of 7-deazaguanine (preQ1-tRNA) to give epoxyqueuosine (oQ-tRNA). This Buchnera aphidicola subsp. Schizaphis graminum (strain Sg) protein is S-adenosylmethionine:tRNA ribosyltransferase-isomerase.